A 151-amino-acid polypeptide reads, in one-letter code: tRNA-specific adenosine deaminase (151 aa).

Positions 4-122 constitute a CMP/dCMP-type deaminase domain; that stretch reads NRDSYWMKIA…PFLKKIFINL (119 aa). Residue histidine 55 coordinates Zn(2+). Glutamate 57 serves as the catalytic Proton donor. Residues cysteine 85 and cysteine 88 each coordinate Zn(2+).

Belongs to the cytidine and deoxycytidylate deaminase family. In terms of assembly, homodimer. Zn(2+) is required as a cofactor.

It carries out the reaction adenosine(34) in tRNA + H2O + H(+) = inosine(34) in tRNA + NH4(+). Functionally, catalyzes the deamination of adenosine to inosine at the wobble position 34 of tRNA(Arg2). This chain is tRNA-specific adenosine deaminase, found in Buchnera aphidicola subsp. Schizaphis graminum (strain Sg).